A 182-amino-acid chain; its full sequence is Coiled-coil domain-containing protein 32 (182 aa).

Positions 1–10 are enriched in basic and acidic residues; it reads MMIDDFETHA. Disordered regions lie at residues 1–61 and 153–182; these read MMID…FSPW and PTQNSETPASSSQTDKPCVEEEEECPSPEK. Residues 153–167 are compositionally biased toward polar residues; the sequence is PTQNSETPASSSQTD. A compositionally biased stretch (acidic residues) spans 172–182; the sequence is EEEEECPSPEK.

In terms of assembly, associates with adaptor protein complex 2 (AP-2).

The protein resides in the membrane. Its subcellular location is the coated pit. Functionally, regulates clathrin-mediated endocytsois of cargos such as transferrin probably through the association and modulation of adaptor protein complex 2 (AP-2). Has a role in ciliogenesis and is required for proper cephalic and left/right axis development. The polypeptide is Coiled-coil domain-containing protein 32 (Danio rerio (Zebrafish)).